A 604-amino-acid chain; its full sequence is Complement factor I (604 aa).

A signal peptide spans 1 to 18; sequence MKLALLILLLLNPHLSSS. 20 cysteine pairs are disulfide-bonded: cysteine 36–cysteine 260, cysteine 46–cysteine 57, cysteine 51–cysteine 62, cysteine 64–cysteine 96, cysteine 70–cysteine 89, cysteine 78–cysteine 109, cysteine 144–cysteine 186, cysteine 157–cysteine 219, cysteine 191–cysteine 201, cysteine 234–cysteine 252, cysteine 246–cysteine 261, cysteine 264–cysteine 276, cysteine 271–cysteine 289, cysteine 283–cysteine 298, cysteine 349–cysteine 474, cysteine 387–cysteine 403, cysteine 395–cysteine 465, cysteine 488–cysteine 552, cysteine 516–cysteine 531, and cysteine 542–cysteine 571. An N-linked (GlcNAc...) asparagine glycan is attached at asparagine 40. In terms of domain architecture, Kazal-like spans 58–111; the sequence is IEGTCACKLPYQCPKAGTPVCATNGRGYPTYCHLKSFECLHPEIKFSNNGTCTA. 3 N-linked (GlcNAc...) asparagine glycosylation sites follow: asparagine 106, asparagine 116, and asparagine 182. Residues 117-217 form the SRCR domain; sequence VSLIYGSTDT…SKAPHGLAGV (101 aa). LDL-receptor class A domains lie at 218–262 and 263–299; these read VCYT…LCCK and GCRGQAFLCKSGVCIPNQRKCNGEVDCITGEDESGCE. Ca(2+)-binding residues include lysine 244, aspartate 247, valine 249, aspartate 251, aspartate 257, and glutamate 258. Positions 284, 286, 288, 294, and 295 each coordinate Ca(2+). A Peptidase S1 domain is found at 362 to 595; it reads VVGGKPAEMG…YFDWISYYVG (234 aa). Active-site charge relay system residues include histidine 402 and aspartate 450. A glycan (N-linked (GlcNAc...) asparagine) is linked at asparagine 515. Serine 546 acts as the Charge relay system in catalysis. A glycan (N-linked (GlcNAc...) asparagine) is linked at asparagine 557.

This sequence belongs to the peptidase S1 family. As to quaternary structure, heterodimer of a light and heavy chains; disulfide-linked. The fully processed and mature protein circulates as a zymogen, and is allosterically activated by substrate-induced remodeling of the active site. Interacts with C3b. Interacts with complement factor H. As to expression, expressed in the liver by hepatocytes. Also present in other cells such as monocytes, fibroblasts or keratinocytes.

The protein localises to the secreted. It localises to the extracellular space. The catalysed reaction is Inactivates complement subcomponents C3b, iC3b and C4b by proteolytic cleavage.. Functionally, trypsin-like serine protease that plays an essential role in regulating the immune response by controlling all complement pathways. Inhibits these pathways by cleaving three peptide bonds in the alpha-chain of C3b and two bonds in the alpha-chain of C4b thereby inactivating these proteins. Essential cofactors for these reactions include factor H and C4BP in the fluid phase and membrane cofactor protein/CD46 and CR1 on cell surfaces. The presence of these cofactors on healthy cells allows degradation of deposited C3b by CFI in order to prevent undesired complement activation, while in apoptotic cells or microbes, the absence of such cofactors leads to C3b-mediated complement activation and subsequent opsonization. The chain is Complement factor I (Cfi) from Rattus norvegicus (Rat).